A 367-amino-acid chain; its full sequence is MKASPHRPTKALIHLGAIRQNIQQMGAHIPQGTLKLAVVKANAYGHGAVAVAKAIQDDVDGFCVSNIDEAIELRQAGLSKPILILGVSEIEAVALAKEYDFTLTVAGLEWIQALLDKEVDLTGLTVHLKIDSGMGRIGFREASEVEQAQDLLQQHGVRVEGIFTHFATADEESDDYFNAQLERFKTILASMKCLPELVHASNSATTLWHVETIFNAVRMGDAMYGLNPSGAVLDLPYDLIPALTLESALVHVKTVPAGACMGYGATYQADSEQVIATVPIGYADGWTRDMQNFSVLVDGQACPIVGRVSMDQITIRLPKPYPLGTKVTLIGSNGDKEITATQVATYRVTINYEVVCLLSDRIPREYY.

Residue Lys-40 is the Proton acceptor; specific for D-alanine of the active site. N6-(pyridoxal phosphate)lysine is present on Lys-40. Substrate is bound at residue Arg-136. The active-site Proton acceptor; specific for L-alanine is Tyr-263. Residue Met-310 participates in substrate binding.

It belongs to the alanine racemase family. It depends on pyridoxal 5'-phosphate as a cofactor.

It catalyses the reaction L-alanine = D-alanine. The protein operates within amino-acid biosynthesis; D-alanine biosynthesis; D-alanine from L-alanine: step 1/1. Its function is as follows. Catalyzes the interconversion of L-alanine and D-alanine. May also act on other amino acids. This chain is Alanine racemase (alr), found in Streptococcus pneumoniae (strain Hungary19A-6).